A 216-amino-acid chain; its full sequence is Large ribosomal subunit protein bL25 (216 aa).

Positions 191 to 216 (LVSAESEEDEDAPAADEVPATEVSEE) are disordered. The span at 195-204 (ESEEDEDAPA) shows a compositional bias: acidic residues.

The protein belongs to the bacterial ribosomal protein bL25 family. CTC subfamily. As to quaternary structure, part of the 50S ribosomal subunit; part of the 5S rRNA/L5/L18/L25 subcomplex. Contacts the 5S rRNA. Binds to the 5S rRNA independently of L5 and L18.

This is one of the proteins that binds to the 5S RNA in the ribosome where it forms part of the central protuberance. The protein is Large ribosomal subunit protein bL25 of Jannaschia sp. (strain CCS1).